Reading from the N-terminus, the 198-residue chain is Large ribosomal subunit protein bL25 (198 aa).

It belongs to the bacterial ribosomal protein bL25 family. CTC subfamily. Part of the 50S ribosomal subunit; part of the 5S rRNA/L5/L18/L25 subcomplex. Contacts the 5S rRNA. Binds to the 5S rRNA independently of L5 and L18.

Functionally, this is one of the proteins that binds to the 5S RNA in the ribosome where it forms part of the central protuberance. The protein is Large ribosomal subunit protein bL25 of Chlorobium phaeobacteroides (strain DSM 266 / SMG 266 / 2430).